A 141-amino-acid chain; its full sequence is Large ribosomal subunit protein uL16m (141 aa).

The protein belongs to the universal ribosomal protein uL16 family.

It is found in the mitochondrion. The protein is Large ribosomal subunit protein uL16m (RPL16) of Acanthamoeba castellanii (Amoeba).